The following is a 296-amino-acid chain: Ribosomal RNA small subunit methyltransferase A (296 aa).

Residues Asn40, Val42, Gly67, Glu88, Asp118, and Asn137 each contribute to the S-adenosyl-L-methionine site.

It belongs to the class I-like SAM-binding methyltransferase superfamily. rRNA adenine N(6)-methyltransferase family. RsmA subfamily.

It localises to the cytoplasm. It carries out the reaction adenosine(1518)/adenosine(1519) in 16S rRNA + 4 S-adenosyl-L-methionine = N(6)-dimethyladenosine(1518)/N(6)-dimethyladenosine(1519) in 16S rRNA + 4 S-adenosyl-L-homocysteine + 4 H(+). Its function is as follows. Specifically dimethylates two adjacent adenosines (A1518 and A1519) in the loop of a conserved hairpin near the 3'-end of 16S rRNA in the 30S particle. May play a critical role in biogenesis of 30S subunits. In Rhodococcus opacus (strain B4), this protein is Ribosomal RNA small subunit methyltransferase A.